The chain runs to 151 residues: Small ribosomal subunit protein uS15 (151 aa).

This sequence belongs to the universal ribosomal protein uS15 family.

This chain is Small ribosomal subunit protein uS15 (RPS13), found in Agaricus bisporus (White button mushroom).